Consider the following 436-residue polypeptide: Citrate synthase (436 aa).

Active-site residues include His-311 and Asp-370.

Belongs to the citrate synthase family.

The catalysed reaction is oxaloacetate + acetyl-CoA + H2O = citrate + CoA + H(+). Its pathway is carbohydrate metabolism; tricarboxylic acid cycle; isocitrate from oxaloacetate: step 1/2. The sequence is that of Citrate synthase (gltA) from Rickettsia typhi (strain ATCC VR-144 / Wilmington).